Here is a 92-residue protein sequence, read N- to C-terminus: Signal recognition particle 19 kDa protein (92 aa).

It belongs to the SRP19 family. In terms of assembly, part of the signal recognition particle protein translocation system, which is composed of SRP and FtsY. Archaeal SRP consists of a 7S RNA molecule of 300 nucleotides and two protein subunits: SRP54 and SRP19.

The protein resides in the cytoplasm. Involved in targeting and insertion of nascent membrane proteins into the cytoplasmic membrane. Binds directly to 7S RNA and mediates binding of the 54 kDa subunit of the SRP. The chain is Signal recognition particle 19 kDa protein from Halobacterium salinarum (strain ATCC 29341 / DSM 671 / R1).